Consider the following 95-residue polypeptide: Small ribosomal subunit protein bS6 (95 aa).

This sequence belongs to the bacterial ribosomal protein bS6 family. As to quaternary structure, part of the 30S ribosomal subunit.

Its function is as follows. Binds together with bS18 to 16S ribosomal RNA. This is Small ribosomal subunit protein bS6 (rpsF) from Bacillus subtilis (strain 168).